The chain runs to 501 residues: Ribulose bisphosphate carboxylase large chain (501 aa).

The substrate site is built by Asn-141 and Thr-191. Lys-193 (proton acceptor) is an active-site residue. Lys-195 is a substrate binding site. Mg(2+)-binding residues include Lys-219, Asp-221, and Glu-222. Lys-219 bears the N6-carboxylysine mark. The Proton acceptor role is filled by His-311. Substrate contacts are provided by Arg-312, His-344, and Ser-396.

It belongs to the RuBisCO large chain family. Type I subfamily. In terms of assembly, heterohexadecamer of 8 large chains and 8 small chains. Mg(2+) is required as a cofactor.

It catalyses the reaction 2 (2R)-3-phosphoglycerate + 2 H(+) = D-ribulose 1,5-bisphosphate + CO2 + H2O. It carries out the reaction D-ribulose 1,5-bisphosphate + O2 = 2-phosphoglycolate + (2R)-3-phosphoglycerate + 2 H(+). Its function is as follows. RuBisCO catalyzes two reactions: the carboxylation of D-ribulose 1,5-bisphosphate, the primary event in carbon dioxide fixation, as well as the oxidative fragmentation of the pentose substrate. Both reactions occur simultaneously and in competition at the same active site. The sequence is that of Ribulose bisphosphate carboxylase large chain from Paraburkholderia phymatum (strain DSM 17167 / CIP 108236 / LMG 21445 / STM815) (Burkholderia phymatum).